The following is an 807-amino-acid chain: MSTGQTIYHSLLKLPLSVMVKSTPIPSNPIEDLNIDIERPIIYALPFRSHVDLLTLQKSAKELGLPDPLSPIEIDGVSYPRYVFTSIGPKMFDTDDDLPQESLDLFKIVLKHHADNPDADFQLIPTSILWGRRPGKEGTSRPHLMPLNGPQKFVTLIKAGRDSTVRISPVVSLRYMADNHGADDAIAHKLARVAKIHFSRQKLAASGPNLPNRQALFNRLLKSQAIEKVILEEARIRNVDVEKVRKEAMGIMEEIATNFSYSLIKNGNRILKWLWNRLYQGLNINNAATVRKLAQEGHEIVYVPCHRSHMDYLLLSYVLYHEGLVPPHIAAGINLNFFPAGPIFRRGGAFFIRRSFKGNRLYSTIFREYLAELFAKGYSVEYFSEGGRSRTGRLLQAKTGMLAMTVQAMLRGLNRPVTLVPVYIGYEHVMEVTTYAKELQGKRKEKENAGQVLRTLRKLRNFGQGYVNFGEPISLNHYLNEHAPNWSESINPIEPQKPEWMSPVVNGIANKMMTHINDAVAANALTLCATALLAARQRALSKEDLTEQLDCYLQLLRNIPYSNTATVPTQDAEALLEHAIALDKFVIEKDTLGEIISLDRNQSILMTYYRNNIIHLFALPSLIAKLVVQYRSISIDNVQAQIQQIYPFLKAELFLHYDESELNDVVSQHIDELVRQKLIERENDVLQLNATNILKVHLLAHTISETLQRYAIALTHLQASPKLGKNDLEEQSQIMAQRLSRLHGINAPEFFDKGVFGILFNTLKAEGYLNSDGVAVISKVEPFSRDMSRLLNPEIKLTIQAVMTKED.

An HXXXXD motif motif is present at residues 305–310; the sequence is CHRSHM.

This sequence belongs to the GPAT/DAPAT family.

Its subcellular location is the cell inner membrane. The enzyme catalyses sn-glycerol 3-phosphate + an acyl-CoA = a 1-acyl-sn-glycero-3-phosphate + CoA. It participates in phospholipid metabolism; CDP-diacylglycerol biosynthesis; CDP-diacylglycerol from sn-glycerol 3-phosphate: step 1/3. The chain is Glycerol-3-phosphate acyltransferase from Aliivibrio salmonicida (strain LFI1238) (Vibrio salmonicida (strain LFI1238)).